The chain runs to 351 residues: Glycerol-1-phosphate dehydrogenase [NAD(P)+] (351 aa).

Residues glycine 97–aspartate 101 and threonine 119–serine 122 each bind NAD(+). Aspartate 124 contributes to the substrate binding site. An NAD(+)-binding site is contributed by serine 128. Aspartate 171 provides a ligand contact to substrate. Zn(2+) is bound by residues aspartate 171 and histidine 251. Position 255 (histidine 255) interacts with substrate. Zn(2+) is bound at residue histidine 267.

The protein belongs to the glycerol-1-phosphate dehydrogenase family. Homodimer. Zn(2+) serves as cofactor.

Its subcellular location is the cytoplasm. The catalysed reaction is sn-glycerol 1-phosphate + NAD(+) = dihydroxyacetone phosphate + NADH + H(+). The enzyme catalyses sn-glycerol 1-phosphate + NADP(+) = dihydroxyacetone phosphate + NADPH + H(+). Its pathway is membrane lipid metabolism; glycerophospholipid metabolism. Catalyzes the NAD(P)H-dependent reduction of dihydroxyacetonephosphate (DHAP or glycerone phosphate) to glycerol 1-phosphate (G1P). The G1P thus generated is used as the glycerophosphate backbone of phospholipids in the cellular membranes of Archaea. This is Glycerol-1-phosphate dehydrogenase [NAD(P)+] from Saccharolobus solfataricus (strain ATCC 35092 / DSM 1617 / JCM 11322 / P2) (Sulfolobus solfataricus).